A 138-amino-acid chain; its full sequence is Ribosome-binding factor A (138 aa).

It belongs to the RbfA family. Monomer. Binds 30S ribosomal subunits, but not 50S ribosomal subunits or 70S ribosomes.

The protein resides in the cytoplasm. One of several proteins that assist in the late maturation steps of the functional core of the 30S ribosomal subunit. Associates with free 30S ribosomal subunits (but not with 30S subunits that are part of 70S ribosomes or polysomes). Required for efficient processing of 16S rRNA. May interact with the 5'-terminal helix region of 16S rRNA. This Bradyrhizobium sp. (strain ORS 278) protein is Ribosome-binding factor A.